The following is a 76-amino-acid chain: Cold shock-like protein CspD (76 aa).

The region spanning 7-67 (GTVKWFNNAK…GPKGYHASCV (61 aa)) is the CSD domain.

It localises to the cytoplasm. This Vibrio cholerae serotype O1 (strain ATCC 39315 / El Tor Inaba N16961) protein is Cold shock-like protein CspD (cspD).